A 292-amino-acid chain; its full sequence is 2-hydroxy-3-oxopropionate reductase (292 aa).

Residues 4–18 (GFIGLGIMGTPMAIN) and Ser94 each bind NAD(+). The active site involves Lys169. Residue Lys237 coordinates NAD(+).

This sequence belongs to the HIBADH-related family.

It carries out the reaction (R)-glycerate + NADP(+) = 2-hydroxy-3-oxopropanoate + NADPH + H(+). The catalysed reaction is (R)-glycerate + NAD(+) = 2-hydroxy-3-oxopropanoate + NADH + H(+). Its pathway is organic acid metabolism; glycolate degradation; 3-phospho-D-glycerate from glycolate: step 3/4. The chain is 2-hydroxy-3-oxopropionate reductase (glxR) from Escherichia coli (strain K12).